The chain runs to 552 residues: MIRSQLKELLDRCFQEGVDNGSWSDRGAGKYTVELPKHEGQGDFSTNIALVLAGIEKRNPRELAGIVAEKLGLETAIVAGVEIAGPGFVNITIQPAVWHGVLAEVFSAGENFGRSQVGAGRKVMVEFVSANPTGPLSIGHGRQAILGDSIARLLEATNHDVFREYYYNNAGRQMRVLGESTRARYLELIGAEFSFPEDGYQGEYIIDIAQSLVDEHGEKLKDEPDVEPFKDQAEKAIFKDISGTLERMGIHFDNYYNERSLYENGHIDSVVQELRDKGLVYEKDDAVWFETTKLGQEKDRVIIKSTGEPTYRLPDIAYHREKFKRNFDWLIDIFGSDHIATVPDVLSGVEALGYDASKVTVLLHQFVTLTRDGKQVKMSTRKANFVTVDELIDVVGEDVLRFFYMLRKADSQLEFDLDLATSQSQDNPVYYVQYAHARLCSILAQSGERGIVPAEVGSSLLQRLQEPEELALLKTLSGFPAAIEGSALDLAPHKFIHYLMEFAGQFHSYYNKHKVITEDLELSQARLCLIQALQLTLQNGLHIIGLTAPKSM.

The short motif at 130–140 (ANPTGPLSIGH) is the 'HIGH' region element.

The protein belongs to the class-I aminoacyl-tRNA synthetase family. As to quaternary structure, monomer.

Its subcellular location is the cytoplasm. It carries out the reaction tRNA(Arg) + L-arginine + ATP = L-arginyl-tRNA(Arg) + AMP + diphosphate. The polypeptide is Arginine--tRNA ligase (Desulfotalea psychrophila (strain LSv54 / DSM 12343)).